The following is a 231-amino-acid chain: Ribonuclease 3 (231 aa).

Residues 7–135 (IQAIESKLNF…ILGAVYLDGG (129 aa)) enclose the RNase III domain. Glutamate 48 is a Mg(2+) binding site. The active site involves aspartate 52. Residues asparagine 121 and glutamate 124 each coordinate Mg(2+). Glutamate 124 is a catalytic residue. Residues 160–229 (NPKNRLQQFT…AKQALSTHDN (70 aa)) enclose the DRBM domain.

It belongs to the ribonuclease III family. As to quaternary structure, homodimer. Mg(2+) is required as a cofactor.

The protein resides in the cytoplasm. The catalysed reaction is Endonucleolytic cleavage to 5'-phosphomonoester.. Digests double-stranded RNA. Involved in the processing of primary rRNA transcript to yield the immediate precursors to the large and small rRNAs (23S and 16S). Processes some mRNAs, and tRNAs when they are encoded in the rRNA operon. Processes pre-crRNA and tracrRNA of type II CRISPR loci if present in the organism. This Chlamydia trachomatis serovar A (strain ATCC VR-571B / DSM 19440 / HAR-13) protein is Ribonuclease 3.